The sequence spans 522 residues: Maturase K (522 aa).

Belongs to the intron maturase 2 family. MatK subfamily.

The protein resides in the plastid. It localises to the chloroplast. Functionally, usually encoded in the trnK tRNA gene intron. Probably assists in splicing its own and other chloroplast group II introns. This is Maturase K from Pillansia templemannii.